Consider the following 525-residue polypeptide: GMP synthase [glutamine-hydrolyzing] (525 aa).

Residues 8–207 (KILILDFGSQ…ALDICGCAAN (200 aa)) enclose the Glutamine amidotransferase type-1 domain. The active-site Nucleophile is the Cys-85. Catalysis depends on residues His-181 and Glu-183. The GMPS ATP-PPase domain occupies 208–400 (WKPSSIIEDA…LGLPYNMLYR (193 aa)). 235-241 (SGGVDSS) lines the ATP pocket.

In terms of assembly, homodimer.

The catalysed reaction is XMP + L-glutamine + ATP + H2O = GMP + L-glutamate + AMP + diphosphate + 2 H(+). Its pathway is purine metabolism; GMP biosynthesis; GMP from XMP (L-Gln route): step 1/1. In terms of biological role, catalyzes the synthesis of GMP from XMP. The chain is GMP synthase [glutamine-hydrolyzing] from Shewanella baltica (strain OS155 / ATCC BAA-1091).